The chain runs to 178 residues: Transcription termination/antitermination protein NusG (178 aa).

Positions 126-156 (VGQQVRVNEGPFADFNGVVEEVNYERNKLRV) constitute a KOW domain.

It belongs to the NusG family.

Participates in transcription elongation, termination and antitermination. In Neisseria meningitidis serogroup B (strain ATCC BAA-335 / MC58), this protein is Transcription termination/antitermination protein NusG.